We begin with the raw amino-acid sequence, 893 residues long: Alanine--tRNA ligase (893 aa).

Zn(2+)-binding residues include histidine 573, histidine 577, cysteine 676, and histidine 680. The segment at 853 to 872 (LGGGGGGKDDLAQGGGQDPS) is disordered.

It belongs to the class-II aminoacyl-tRNA synthetase family. Zn(2+) serves as cofactor.

The protein resides in the cytoplasm. It carries out the reaction tRNA(Ala) + L-alanine + ATP = L-alanyl-tRNA(Ala) + AMP + diphosphate. In terms of biological role, catalyzes the attachment of alanine to tRNA(Ala) in a two-step reaction: alanine is first activated by ATP to form Ala-AMP and then transferred to the acceptor end of tRNA(Ala). Also edits incorrectly charged Ser-tRNA(Ala) and Gly-tRNA(Ala) via its editing domain. The chain is Alanine--tRNA ligase from Kineococcus radiotolerans (strain ATCC BAA-149 / DSM 14245 / SRS30216).